Reading from the N-terminus, the 506-residue chain is Maturase K (506 aa).

This sequence belongs to the intron maturase 2 family. MatK subfamily.

The protein resides in the plastid. It is found in the chloroplast. Functionally, usually encoded in the trnK tRNA gene intron. Probably assists in splicing its own and other chloroplast group II introns. The polypeptide is Maturase K (Crataegus monogyna (Hawthorn)).